Here is a 129-residue protein sequence, read N- to C-terminus: MSRKDARVQAFQTLFQLEIKETDLTIQEAIEFIKDDHSDLDFDFIYWLVTGVKDHQIVLDETIKPHLKDWSIDRLLKSDRIILRMATFEILHSDTPKKVVVNEAVELTKQFSDDDHYKFVNGVLSNIND.

Belongs to the NusB family.

Its function is as follows. Involved in transcription antitermination. Required for transcription of ribosomal RNA (rRNA) genes. Binds specifically to the boxA antiterminator sequence of the ribosomal RNA (rrn) operons. The chain is Transcription antitermination protein NusB from Staphylococcus epidermidis (strain ATCC 35984 / DSM 28319 / BCRC 17069 / CCUG 31568 / BM 3577 / RP62A).